The chain runs to 166 residues: Peroxynitrite isomerase Rv2717c (166 aa).

The GXWXGXG motif lies at 28–34; the sequence is GTWRGQG. Residues threonine 40 and histidine 158 each coordinate heme b.

It belongs to the nitrobindin family. As to quaternary structure, homodimer. Heme b is required as a cofactor.

It localises to the cytoplasm. It carries out the reaction peroxynitrite = nitrate. It participates in nitrogen metabolism. Its function is as follows. Heme-binding protein able to scavenge peroxynitrite and to protect free L-tyrosine against peroxynitrite-mediated nitration, by acting as a peroxynitrite isomerase that converts peroxynitrite to nitrate. Therefore, this protein likely plays a role in peroxynitrite sensing and in the detoxification of reactive nitrogen and oxygen species (RNS and ROS, respectively). Is able to bind nitric oxide (NO) in vitro, but may act as a sensor of peroxynitrite levels in vivo. The chain is Peroxynitrite isomerase Rv2717c from Arabidopsis thaliana (Mouse-ear cress).